The primary structure comprises 506 residues: Protein CYCLOPS (506 aa).

2 disordered regions span residues 193-223 (TVNSAPMSNTPSQTPTFVSPSSSSTSPLDNP) and 385-434 (KENL…RSST). Over residues 202–219 (TPSQTPTFVSPSSSSTSP) the composition is skewed to low complexity. The segment covering 385 to 394 (KENLKDDRKK) has biased composition (basic and acidic residues). Positions 415-418 (KKRR) match the Nuclear localization signal motif. Positions 422-432 (SRKMAEAKERS) are enriched in basic and acidic residues. Positions 441–506 (IQVVLKRCET…IERIVSDTNT (66 aa)) form a coiled coil.

It belongs to the CYCLOPS family. As to expression, highly epressed in roots. Expressed at very low levels in leaves, stems and panicles.

It is found in the nucleus. In terms of biological role, involved in arbuscular mycorrhizal (AM) symbiosis. Required for fungal infection in roots and arbuscule development during AM symbiosis. This Oryza sativa subsp. japonica (Rice) protein is Protein CYCLOPS.